The chain runs to 443 residues: Chromosome partition protein MukF (443 aa).

The leucine-zipper stretch occupies residues 209–237; that stretch reads LDETSGNLRELQDVLNASGDKLQSQLLRI.

This sequence belongs to the MukF family. Interacts, and probably forms a ternary complex, with MukE and MukB via its C-terminal region. The complex formation is stimulated by calcium or magnesium. It is required for an interaction between MukE and MukB.

It is found in the cytoplasm. It localises to the nucleoid. Involved in chromosome condensation, segregation and cell cycle progression. May participate in facilitating chromosome segregation by condensation DNA from both sides of a centrally located replisome during cell division. Not required for mini-F plasmid partitioning. Probably acts via its interaction with MukB and MukE. Overexpression results in anucleate cells. It has a calcium binding activity. This chain is Chromosome partition protein MukF, found in Glaesserella parasuis serovar 5 (strain SH0165) (Haemophilus parasuis).